Reading from the N-terminus, the 236-residue chain is Phosphatidylserine decarboxylase proenzyme (236 aa).

Serine 194 serves as the catalytic Schiff-base intermediate with substrate; via pyruvic acid. Pyruvic acid (Ser); by autocatalysis is present on serine 194.

It belongs to the phosphatidylserine decarboxylase family. PSD-A subfamily. As to quaternary structure, heterodimer of a large membrane-associated beta subunit and a small pyruvoyl-containing alpha subunit. Pyruvate serves as cofactor. Post-translationally, is synthesized initially as an inactive proenzyme. Formation of the active enzyme involves a self-maturation process in which the active site pyruvoyl group is generated from an internal serine residue via an autocatalytic post-translational modification. Two non-identical subunits are generated from the proenzyme in this reaction, and the pyruvate is formed at the N-terminus of the alpha chain, which is derived from the carboxyl end of the proenzyme. The post-translation cleavage follows an unusual pathway, termed non-hydrolytic serinolysis, in which the side chain hydroxyl group of the serine supplies its oxygen atom to form the C-terminus of the beta chain, while the remainder of the serine residue undergoes an oxidative deamination to produce ammonia and the pyruvoyl prosthetic group on the alpha chain.

It is found in the cell membrane. The catalysed reaction is a 1,2-diacyl-sn-glycero-3-phospho-L-serine + H(+) = a 1,2-diacyl-sn-glycero-3-phosphoethanolamine + CO2. The protein operates within phospholipid metabolism; phosphatidylethanolamine biosynthesis; phosphatidylethanolamine from CDP-diacylglycerol: step 2/2. Its function is as follows. Catalyzes the formation of phosphatidylethanolamine (PtdEtn) from phosphatidylserine (PtdSer). This Rhodospirillum rubrum (strain ATCC 11170 / ATH 1.1.1 / DSM 467 / LMG 4362 / NCIMB 8255 / S1) protein is Phosphatidylserine decarboxylase proenzyme.